Here is a 415-residue protein sequence, read N- to C-terminus: Serine hydroxymethyltransferase (415 aa).

(6S)-5,6,7,8-tetrahydrofolate-binding positions include L122 and 126–128 (GHL). N6-(pyridoxal phosphate)lysine is present on K230.

Belongs to the SHMT family. Homodimer. Requires pyridoxal 5'-phosphate as cofactor.

It localises to the cytoplasm. It carries out the reaction (6R)-5,10-methylene-5,6,7,8-tetrahydrofolate + glycine + H2O = (6S)-5,6,7,8-tetrahydrofolate + L-serine. It participates in one-carbon metabolism; tetrahydrofolate interconversion. The protein operates within amino-acid biosynthesis; glycine biosynthesis; glycine from L-serine: step 1/1. Its function is as follows. Catalyzes the reversible interconversion of serine and glycine with tetrahydrofolate (THF) serving as the one-carbon carrier. This reaction serves as the major source of one-carbon groups required for the biosynthesis of purines, thymidylate, methionine, and other important biomolecules. Also exhibits THF-independent aldolase activity toward beta-hydroxyamino acids, producing glycine and aldehydes, via a retro-aldol mechanism. The polypeptide is Serine hydroxymethyltransferase (Cupriavidus taiwanensis (strain DSM 17343 / BCRC 17206 / CCUG 44338 / CIP 107171 / LMG 19424 / R1) (Ralstonia taiwanensis (strain LMG 19424))).